The primary structure comprises 417 residues: Serine hydroxymethyltransferase (417 aa).

(6S)-5,6,7,8-tetrahydrofolate is bound by residues leucine 112 and 116-118 (GHL). Lysine 221 carries the post-translational modification N6-(pyridoxal phosphate)lysine. Position 247 (glutamate 247) interacts with (6S)-5,6,7,8-tetrahydrofolate.

It belongs to the SHMT family. Homodimer. Requires pyridoxal 5'-phosphate as cofactor.

The protein resides in the cytoplasm. The enzyme catalyses (6R)-5,10-methylene-5,6,7,8-tetrahydrofolate + glycine + H2O = (6S)-5,6,7,8-tetrahydrofolate + L-serine. It participates in one-carbon metabolism; tetrahydrofolate interconversion. Its pathway is amino-acid biosynthesis; glycine biosynthesis; glycine from L-serine: step 1/1. In terms of biological role, catalyzes the reversible interconversion of serine and glycine with tetrahydrofolate (THF) serving as the one-carbon carrier. This reaction serves as the major source of one-carbon groups required for the biosynthesis of purines, thymidylate, methionine, and other important biomolecules. Also exhibits THF-independent aldolase activity toward beta-hydroxyamino acids, producing glycine and aldehydes, via a retro-aldol mechanism. This chain is Serine hydroxymethyltransferase, found in Borrelia recurrentis (strain A1).